A 299-amino-acid chain; its full sequence is MAGSLSSAIFNVLKYSGMASLAVTLIALGFLYKYQKTLVYPSAFPQGSRENVPTPKEFNMEYERIELRTRDKVTLDSYLMLQSESPESRPTLLYFHANAGNMGHRLPIARVFYSALNMNVFIISYRGYGKSTGSPSEAGLKIDSQTALEYLMEHPICSKTKIVVYGQSIGGAVAIALTAKNQDRISALILENTFTSIKDMIPTVFPYGGSIISRFCTEIWSSQDEIRKIKKLPVLFLSGEKDEIVPPPQMVLLFGLCGSAKKKFHSFPKCTHNDTCLGDGYFQVIADFLAENDINTPAS.

A helical membrane pass occupies residues 15 to 32 (YSGMASLAVTLIALGFLY).

The protein belongs to the serine esterase family.

The protein resides in the membrane. Functionally, suppressor of bem1/bud5. This Schizosaccharomyces pombe (strain 972 / ATCC 24843) (Fission yeast) protein is Protein bem46 (bem46).